A 256-amino-acid polypeptide reads, in one-letter code: Phosphonates import ATP-binding protein PhnC (256 aa).

Residues L5–S253 enclose the ABC transporter domain. Position 38-45 (G38–S45) interacts with ATP.

It belongs to the ABC transporter superfamily. Phosphonates importer (TC 3.A.1.9.1) family. The complex is composed of two ATP-binding proteins (PhnC), two transmembrane proteins (PhnE) and a solute-binding protein (PhnD).

It localises to the cell inner membrane. The catalysed reaction is phosphonate(out) + ATP + H2O = phosphonate(in) + ADP + phosphate + H(+). Functionally, part of the ABC transporter complex PhnCDE involved in phosphonates import. Responsible for energy coupling to the transport system. In Bordetella parapertussis (strain 12822 / ATCC BAA-587 / NCTC 13253), this protein is Phosphonates import ATP-binding protein PhnC.